The chain runs to 251 residues: MNLISIPAFQDNYIWLLANRQKHCVIVDPGESAPVLATLAQGQYVPQAILLTHHHNDHVGGVADLRHHFPDIPVYGPQETAKKGATVIVNDGDSLTIAGQNYTIIAVPGHTLGHIAYYSSPYLFCGDTLFSAGCGRLLEGTPEQMYASIQRLAQLPDETLICCAHEYTLSNLKFAHAILPADQDIATYQQQIEQLRSKNLPSLPVKLQFERKINVFLRCNDIDLQRKIGTTSPPDSLVSVFCELRSRKDSF.

Residues H53, H55, D57, H58, H110, D127, and H165 each coordinate Zn(2+).

Belongs to the metallo-beta-lactamase superfamily. Glyoxalase II family. Monomer. It depends on Zn(2+) as a cofactor.

It carries out the reaction an S-(2-hydroxyacyl)glutathione + H2O = a 2-hydroxy carboxylate + glutathione + H(+). It functions in the pathway secondary metabolite metabolism; methylglyoxal degradation; (R)-lactate from methylglyoxal: step 2/2. Its function is as follows. Thiolesterase that catalyzes the hydrolysis of S-D-lactoyl-glutathione to form glutathione and D-lactic acid. The polypeptide is Hydroxyacylglutathione hydrolase (Yersinia pestis).